A 186-amino-acid polypeptide reads, in one-letter code: MEHGEISSKAPLVAPVAAGVNRAVAVVDTFLRFIAIIGTIGSAIAMGTTNETLPFFTQFIQFEAKYSDLPSFTFFVAANAVVCTYLVLSIPLSIVHILRPRARYSRLFLVFFDTAMLALLTAGASAAAAIVYLAHKGNVRANWFSICQQFDSFCERISGSLIGSFAAMVLLVVLITLSAFALARRH.

The Cytoplasmic segment spans residues 1 to 23 (MEHGEISSKAPLVAPVAAGVNRA). A helical membrane pass occupies residues 24-44 (VAVVDTFLRFIAIIGTIGSAI). Topologically, residues 45-73 (AMGTTNETLPFFTQFIQFEAKYSDLPSFT) are extracellular. N50 carries N-linked (GlcNAc...) asparagine glycosylation. Residues 74-94 (FFVAANAVVCTYLVLSIPLSI) form a helical membrane-spanning segment. The Cytoplasmic segment spans residues 95–106 (VHILRPRARYSR). Residues 107-127 (LFLVFFDTAMLALLTAGASAA) form a helical membrane-spanning segment. Residues 128-160 (AAIVYLAHKGNVRANWFSICQQFDSFCERISGS) lie on the Extracellular side of the membrane. Residues 161-181 (LIGSFAAMVLLVVLITLSAFA) form a helical membrane-spanning segment. The Cytoplasmic segment spans residues 182–186 (LARRH).

The protein belongs to the Casparian strip membrane proteins (CASP) family. As to quaternary structure, homodimer and heterodimers.

Its subcellular location is the cell membrane. In terms of biological role, regulates membrane-cell wall junctions and localized cell wall deposition. Required for establishment of the Casparian strip membrane domain (CSD) and the subsequent formation of Casparian strips, a cell wall modification of the root endodermis that determines an apoplastic barrier between the intraorganismal apoplasm and the extraorganismal apoplasm and prevents lateral diffusion. This is Casparian strip membrane protein 5 from Oryza sativa subsp. japonica (Rice).